The chain runs to 111 residues: Putative protein p34 (111 aa).

The polypeptide is Putative protein p34 (34) (Acyrthosiphon pisum secondary endosymbiont phage 1 (Bacteriophage APSE-1)).